Here is a 289-residue protein sequence, read N- to C-terminus: ATP synthase gamma chain (289 aa).

Belongs to the ATPase gamma chain family. In terms of assembly, F-type ATPases have 2 components, CF(1) - the catalytic core - and CF(0) - the membrane proton channel. CF(1) has five subunits: alpha(3), beta(3), gamma(1), delta(1), epsilon(1). CF(0) has three main subunits: a, b and c.

It is found in the cell inner membrane. Its function is as follows. Produces ATP from ADP in the presence of a proton gradient across the membrane. The gamma chain is believed to be important in regulating ATPase activity and the flow of protons through the CF(0) complex. In Cereibacter sphaeroides (strain ATCC 17025 / ATH 2.4.3) (Rhodobacter sphaeroides), this protein is ATP synthase gamma chain.